Consider the following 241-residue polypeptide: Ribonuclease PH (241 aa).

Residues Arg-87 and 125 to 127 each bind phosphate; that span reads GTR.

Belongs to the RNase PH family. As to quaternary structure, homohexameric ring arranged as a trimer of dimers.

It catalyses the reaction tRNA(n+1) + phosphate = tRNA(n) + a ribonucleoside 5'-diphosphate. Its function is as follows. Phosphorolytic 3'-5' exoribonuclease that plays an important role in tRNA 3'-end maturation. Removes nucleotide residues following the 3'-CCA terminus of tRNAs; can also add nucleotides to the ends of RNA molecules by using nucleoside diphosphates as substrates, but this may not be physiologically important. Probably plays a role in initiation of 16S rRNA degradation (leading to ribosome degradation) during starvation. In Nitrosomonas europaea (strain ATCC 19718 / CIP 103999 / KCTC 2705 / NBRC 14298), this protein is Ribonuclease PH.